The following is a 261-amino-acid chain: uncharacterized protein (261 aa).

The 236-residue stretch at 1–236 folds into the ABC transporter domain; the sequence is MEIKEITIIG…SRKINEVDNW (236 aa). 36–43 lines the ATP pocket; it reads GPTGSGKS.

It belongs to the ABC transporter superfamily.

This is an uncharacterized protein from Methanocaldococcus jannaschii (strain ATCC 43067 / DSM 2661 / JAL-1 / JCM 10045 / NBRC 100440) (Methanococcus jannaschii).